Consider the following 502-residue polypeptide: L-ornithine N(5)-monooxygenase (502 aa).

Over residues 1 to 10 (MEPVERKLEI) the composition is skewed to basic and acidic residues. The disordered stretch occupies residues 1–34 (MEPVERKLEIGSRSYSKMPLTQQRSSGEPPRLKA). Residues 13-26 (RSYSKMPLTQQRSS) show a composition bias toward polar residues. FAD contacts are provided by residues 83-91 (ERQKQFAWH) and Gln102. Residue Lys107 participates in substrate binding. Val168 lines the FAD pocket. NADP(+) contacts are provided by residues 254–257 (SGQS) and Arg279. Residues 293–296 (NEVF) and Asn323 each bind substrate. An NADP(+)-binding site is contributed by 323 to 325 (NYS). 466–468 (SLL) contacts FAD. Ser469 is a substrate binding site.

The protein belongs to the lysine N(6)-hydroxylase/L-ornithine N(5)-oxygenase family. In terms of assembly, homotetramer. FAD serves as cofactor.

The catalysed reaction is L-ornithine + NADPH + O2 = N(5)-hydroxy-L-ornithine + NADP(+) + H2O. The enzyme catalyses L-ornithine + NADH + O2 = N(5)-hydroxy-L-ornithine + NAD(+) + H2O. It participates in siderophore biosynthesis. Its function is as follows. Catalyzes the conversion of L-ornithine to N(5)-hydroxyornithine, the first step in the biosynthesis of all hydroxamate-containing siderophores, such as deferriferrichrysin. The chain is L-ornithine N(5)-monooxygenase from Aspergillus oryzae (strain ATCC 42149 / RIB 40) (Yellow koji mold).